The chain runs to 107 residues: Glutaredoxin 4 (107 aa).

Residues 4–106 (IDKIKQQINE…TLLKETATKH (103 aa)) enclose the Glutaredoxin domain. A glutathione-binding site is contributed by Lys21. Cys29 contributes to the [2Fe-2S] cluster binding site. Residues Arg58, Phe70, and 83–84 (CD) contribute to the glutathione site.

It belongs to the glutaredoxin family. Monothiol subfamily. In terms of assembly, homodimer.

The protein localises to the cytoplasm. Its function is as follows. Monothiol glutaredoxin involved in the biogenesis of iron-sulfur clusters. The sequence is that of Glutaredoxin 4 (grxD) from Haemophilus ducreyi (strain 35000HP / ATCC 700724).